Here is a 211-residue protein sequence, read N- to C-terminus: HTH-type transcriptional repressor FabR (211 aa).

Positions 10-70 (RTRRSLVEAA…TMVDESGLML (61 aa)) constitute an HTH tetR-type domain. The segment at residues 33–52 (SLREVAREAGIAPTSFYRHF) is a DNA-binding region (H-T-H motif).

As to quaternary structure, homodimer.

It localises to the cytoplasm. In terms of biological role, represses the transcription of fabB, involved in unsaturated fatty acid (UFA) biosynthesis. By controlling UFA production, FabR directly influences the physical properties of the membrane bilayer. In Cronobacter sakazakii (strain ATCC BAA-894) (Enterobacter sakazakii), this protein is HTH-type transcriptional repressor FabR.